Reading from the N-terminus, the 256-residue chain is NAD(P)H-hydrate epimerase (256 aa).

Basic and acidic residues predominate over residues 1–18 (MADPRRDPAAESKDRPST). Residues 1–21 (MADPRRDPAAESKDRPSTERV) are disordered. One can recognise a YjeF N-terminal domain in the interval 23-229 (AYTADAVRAA…DLGLEPYLRR (207 aa)). Residue 74–78 (DNGGD) coordinates (6S)-NADPHX. The K(+) site is built by asparagine 75 and aspartate 135. (6S)-NADPHX contacts are provided by residues 139–147 (GIGRLADRR) and aspartate 172. Serine 175 contributes to the K(+) binding site.

It belongs to the NnrE/AIBP family. K(+) serves as cofactor.

It carries out the reaction (6R)-NADHX = (6S)-NADHX. The catalysed reaction is (6R)-NADPHX = (6S)-NADPHX. In terms of biological role, catalyzes the epimerization of the S- and R-forms of NAD(P)HX, a damaged form of NAD(P)H that is a result of enzymatic or heat-dependent hydration. This is a prerequisite for the S-specific NAD(P)H-hydrate dehydratase to allow the repair of both epimers of NAD(P)HX. The polypeptide is NAD(P)H-hydrate epimerase (Microbacterium testaceum (strain StLB037)).